A 443-amino-acid polypeptide reads, in one-letter code: Transcriptional adapter 2-alpha (443 aa).

P6 carries the phosphoserine; in variant Ser-6 modification. The segment at 12-69 (SDKPPCRGCSSYLMEPYIKCAECGPPPFFLCLQCFTRGFEYKKHQSDHTYEIMTSDFP) adopts a ZZ-type zinc-finger fold. The Zn(2+) site is built by C17, C20, C31, C34, C42, C45, H55, and H59. Positions 70 to 122 (VLDPSWTAQEEMALLEAVMDCGFGNWQDVANQMCTKTKEECEKHYMKHFINNP) constitute an SANT domain. Residues K132 and K138 each participate in a glycyl lysine isopeptide (Lys-Gly) (interchain with G-Cter in SUMO2) cross-link. Positions 348-372 (SPSIPMASNSGRRSAPPLNLTGLPG) are disordered. Residues 356–443 (NSGRRSAPPL…LIREGYITKG (88 aa)) form the SWIRM domain. Residues 426–435 (KTRKIYDFLI) mediate DNA binding.

In terms of assembly, interacts with GCN5 and NR3C1. Associated with the P/CAF protein in the PCAF complex. Component of the PCAF complex, at least composed of TADA2L/ADA2, TADA3L/ADA3, TAF5L/PAF65-beta, TAF6L/PAF65-alpha, TAF10/TAFII30, TAF12/TAFII20, TAF9/TAFII31 and TRRAP. Component of the ADA2A-containing complex (ATAC), composed of KAT14, KAT2A, TADA2L, TADA3L, ZZ3, MBIP, WDR5, YEATS2, CCDC101 and DR1. Interacts with CCDC134. In terms of tissue distribution, expressed in all tissues, but most abundantly in testis.

It localises to the nucleus. The protein resides in the chromosome. In terms of biological role, component of the ATAC complex, a complex with histone acetyltransferase activity on histones H3 and H4. Required for the function of some acidic activation domains, which activate transcription from a distant site. Binds double-stranded DNA. Binds dinucleosomes, probably at the linker region between neighboring nucleosomes. Plays a role in chromatin remodeling. May promote TP53/p53 'Lys-321' acetylation, leading to reduced TP53 stability and transcriptional activity. May also promote XRCC6 acetylation thus facilitating cell apoptosis in response to DNA damage. This chain is Transcriptional adapter 2-alpha (TADA2A), found in Homo sapiens (Human).